The sequence spans 153 residues: Large ribosomal subunit protein uL30 (153 aa).

It belongs to the universal ribosomal protein uL30 family. Part of the 50S ribosomal subunit.

The chain is Large ribosomal subunit protein uL30 from Methanosarcina mazei (strain ATCC BAA-159 / DSM 3647 / Goe1 / Go1 / JCM 11833 / OCM 88) (Methanosarcina frisia).